The following is a 163-amino-acid chain: ATP synthase subunit b 1 (163 aa).

A helical membrane pass occupies residues 7–27; sequence AETWVAIAFVILMGIFAYLGV.

This sequence belongs to the ATPase B chain family. F-type ATPases have 2 components, F(1) - the catalytic core - and F(0) - the membrane proton channel. F(1) has five subunits: alpha(3), beta(3), gamma(1), delta(1), epsilon(1). F(0) has three main subunits: a(1), b(2) and c(10-14). The alpha and beta chains form an alternating ring which encloses part of the gamma chain. F(1) is attached to F(0) by a central stalk formed by the gamma and epsilon chains, while a peripheral stalk is formed by the delta and b chains.

It is found in the cell inner membrane. F(1)F(0) ATP synthase produces ATP from ADP in the presence of a proton or sodium gradient. F-type ATPases consist of two structural domains, F(1) containing the extramembraneous catalytic core and F(0) containing the membrane proton channel, linked together by a central stalk and a peripheral stalk. During catalysis, ATP synthesis in the catalytic domain of F(1) is coupled via a rotary mechanism of the central stalk subunits to proton translocation. Its function is as follows. Component of the F(0) channel, it forms part of the peripheral stalk, linking F(1) to F(0). The chain is ATP synthase subunit b 1 from Rhodopseudomonas palustris (strain HaA2).